Reading from the N-terminus, the 256-residue chain is Small ribosomal subunit protein uS2 (256 aa).

The protein belongs to the universal ribosomal protein uS2 family.

The sequence is that of Small ribosomal subunit protein uS2 from Streptococcus agalactiae serotype III (strain NEM316).